The following is a 248-amino-acid chain: Deoxyribose-phosphate aldolase (248 aa).

D106 functions as the Proton donor/acceptor in the catalytic mechanism. Residue K168 is the Schiff-base intermediate with acetaldehyde of the active site. The Proton donor/acceptor role is filled by K197.

This sequence belongs to the DeoC/FbaB aldolase family. DeoC type 1 subfamily.

The protein localises to the cytoplasm. It catalyses the reaction 2-deoxy-D-ribose 5-phosphate = D-glyceraldehyde 3-phosphate + acetaldehyde. It participates in carbohydrate degradation; 2-deoxy-D-ribose 1-phosphate degradation; D-glyceraldehyde 3-phosphate and acetaldehyde from 2-deoxy-alpha-D-ribose 1-phosphate: step 2/2. Its function is as follows. Catalyzes a reversible aldol reaction between acetaldehyde and D-glyceraldehyde 3-phosphate to generate 2-deoxy-D-ribose 5-phosphate. The polypeptide is Deoxyribose-phosphate aldolase (Sinorhizobium medicae (strain WSM419) (Ensifer medicae)).